We begin with the raw amino-acid sequence, 426 residues long: Probable serine/threonine-protein kinase PBL2 (426 aa).

The interval 1-54 is disordered; the sequence is MGNCLDSSAKVDNSNHSPHANSASSGSKVSSKTSRSTGPSGLSTTSYSTDSSFG. The N-myristoyl glycine moiety is linked to residue glycine 2. Cysteine 4 carries the S-palmitoyl cysteine lipid modification. Low complexity predominate over residues 14-38; sequence SNHSPHANSASSGSKVSSKTSRSTG. The span at 39–52 shows a compositional bias: polar residues; that stretch reads PSGLSTTSYSTDSS. Threonine 75 carries the post-translational modification Phosphothreonine. In terms of domain architecture, Protein kinase spans 86–369; it reads FRQDNLLGEG…SEVLVTLEQL (284 aa). Residues 92–100 and lysine 124 each bind ATP; that span reads LGEGGFGCV. Tyrosine 169 carries the phosphotyrosine modification. The active-site Proton acceptor is the aspartate 219. An O-UMP-serine modification is found at serine 253. At serine 253 the chain carries Phosphoserine. 2 positions are modified to phosphothreonine: threonine 254 and threonine 259. Position 254 is an O-UMP-threonine (threonine 254). Tyrosine 267 is subject to Phosphotyrosine. The disordered stretch occupies residues 374–426; the sequence is KPGTKHTQMESPRFHHSSVMQKSPVRYSHDRPLLHMTPGASPLPSYTQSPRVR. Polar residues predominate over residues 417–426; sequence PSYTQSPRVR.

It belongs to the protein kinase superfamily. Ser/Thr protein kinase family. As to quaternary structure, interacts with FLS2. Interacts with the Xanthomonas campestris effector XopAC/AvrAC; the recognition of X.campestris effector XopAC/AvrAC requires the presence of RKS1 and RPP13L4/ZAR1. Component of a stable high-order oligomeric complex made of RKS1 and RPP13L4/ZAR1 which recruits X.campestris effector XopAC/AvrAC-mediated uridylylated PBL2 in the presence of ATP to form a wheel-like pentameric resistosome; this complex triggers immunity toward X.campestris in vascular tissues. Binds to RKS1 when uridylylated. Uridylylated at Ser-253 and Thr-254 by Xanthomonas campestris effector AvrAC/XopAC; this uridylylation is necessary for specific recruitment to RKS1 and to trigger immunity. As to expression, strongly expressed in leaves, moderately in roots, and barely in flowers, mostly in pedicels.

The protein localises to the cell membrane. It localises to the nucleus. It catalyses the reaction L-seryl-[protein] + ATP = O-phospho-L-seryl-[protein] + ADP + H(+). The catalysed reaction is L-threonyl-[protein] + ATP = O-phospho-L-threonyl-[protein] + ADP + H(+). Its function is as follows. Involved in disease resistance signaling. Contributes to pathogen-associated molecular pattern (PAMP)-triggered immunity (PTI) signaling and defense responses downstream of FLS2. Acts as a BIK1 decoy and enables Xanthomonas campestris AvrAC/XopAC detection; X.campestris effector AvrAC/XopAC-mediated uridylylation promotes the formation of a complex with RKS1 and RPP13L4/ZAR1 which, in turn, activates effector-triggered immunity (ETI) against X.campestris. Promotes, when uridylylated by AvrAC/XopAC, the release of ADP from the inactive RKS1-ZAR1 complex, thus activating the resistosome. This is Probable serine/threonine-protein kinase PBL2 from Arabidopsis thaliana (Mouse-ear cress).